The primary structure comprises 777 residues: Glucocorticoid receptor (777 aa).

Basic and acidic residues predominate over residues methionine 1–asparagine 14. The segment at methionine 1–glutamate 22 is disordered. The tract at residues methionine 1–leucine 420 is modulating. Threonine 8 is modified (phosphothreonine). At arginine 23 the chain carries Omega-N-methylarginine. Phosphoserine occurs at positions 45, 113, 134, and 141. A disordered region spans residues asparagine 130–lysine 182. The span at serine 134–alanine 150 shows a compositional bias: low complexity. Residues proline 151–valine 163 are compositionally biased toward basic and acidic residues. Residues serine 164–threonine 174 show a composition bias toward polar residues. Phosphoserine occurs at positions 203, 211, and 226. Lysine 258 is covalently cross-linked (Glycyl lysine isopeptide (Lys-Gly) (interchain with G-Cter in SUMO2)). Serine 267 is subject to Phosphoserine. Residues lysine 277 and lysine 293 each participate in a glycyl lysine isopeptide (Lys-Gly) (interchain with G-Cter in SUMO); alternate cross-link. Glycyl lysine isopeptide (Lys-Gly) (interchain with G-Cter in SUMO2); alternate cross-links involve residues lysine 277 and lysine 293. The span at serine 394 to threonine 414 shows a compositional bias: low complexity. The disordered stretch occupies residues serine 394 to glycine 415. Serine 404 is subject to Phosphoserine. Lysine 419 participates in a covalent cross-link: Glycyl lysine isopeptide (Lys-Gly) (interchain with G-Cter in ubiquitin). 2 NR C4-type zinc fingers span residues cysteine 421 to cysteine 441 and cysteine 457 to cysteine 481. The segment at residues cysteine 421–methionine 486 is a DNA-binding region (nuclear receptor). N6-acetyllysine occurs at positions 480, 492, 494, and 495. Residues glycine 485–lysine 777 are interaction with CLOCK. The interval asparagine 487–alanine 523 is hinge. In terms of domain architecture, NR LBD spans threonine 524 to threonine 758. The segment at leucine 532–leucine 697 is interaction with CRY1. Lysine 703 participates in a covalent cross-link: Glycyl lysine isopeptide (Lys-Gly) (interchain with G-Cter in SUMO).

This sequence belongs to the nuclear hormone receptor family. NR3 subfamily. Heteromultimeric cytoplasmic complex with HSP90AA1, HSPA1A/HSPA1B, and FKBP5 or another immunophilin such as PPID, STIP1, or the immunophilin homolog PPP5C. Upon ligand binding FKBP5 dissociates from the complex and FKBP4 takes its place, thereby linking the complex to dynein and mediating transport to the nucleus, where the complex dissociates. Probably forms a complex composed of chaperones HSP90 and HSP70, co-chaperones CDC37, PPP5C, TSC1 and client protein TSC2, CDK4, AKT, RAF1 and NR3C1; this complex does not contain co-chaperones STIP1/HOP and PTGES3/p23. Directly interacts with UNC45A. Binds to DNA as a homodimer, and as heterodimer with NR3C2 or the retinoid X receptor. Binds STAT5A and STAT5B homodimers and heterodimers. Interacts with NRIP1, POU2F1, POU2F2 and TRIM28. Interacts with several coactivator complexes, including the SMARCA4 complex, CREBBP/EP300, TADA2L (Ada complex) and p160 coactivators such as NCOA2 and NCOA6. Interaction with BAG1 inhibits transactivation. Interacts with HEXIM1 and TGFB1I1. Interacts with NCOA1. Interacts with NCOA3, SMARCA4, SMARCC1, SMARCD1, and SMARCE1. Interacts with CLOCK, CRY1 and CRY2 in a ligand-dependent fashion. Interacts with CIART. Interacts with RWDD3. Interacts with UBE2I/UBC9 and this interaction is enhanced in the presence of RWDD3. Interacts with GRIP1. Interacts with NR4A3 (via nuclear receptor DNA-binding domain), represses transcription activity of NR4A3 on the POMC promoter Nur response element (NurRE). Directly interacts with PNRC2 to attract and form a complex with UPF1 and DCP1A; the interaction leads to rapid mRNA degradation. Interacts with GSK3B. Interacts with FNIP1 and FNIP2. Interacts (via C-terminus) with HNRNPU (via C-terminus). Interacts with MCM3AP. Interacts (via domain NR LBD) with HSP90AA1 and HSP90AB1. In the absence of hormonal ligand, interacts with TACC1. Interacts (via NR LBD domain) with ZNF764 (via KRAB domain); the interaction regulates transcription factor activity of NR3C1 by directing its actions toward certain biologic pathways. Post-translationally, acetylation by CLOCK reduces its binding to glucocorticoid response elements and its transcriptional activity. Increased proteasome-mediated degradation in response to glucocorticoids. In terms of processing, phosphorylated in the absence of hormone; becomes hyperphosphorylated in the presence of glucocorticoid. The Ser-203, Ser-226 and Ser-404-phosphorylated forms are mainly cytoplasmic, and the Ser-211-phosphorylated form is nuclear. Phosphorylation at Ser-211 increases transcriptional activity. Phosphorylation at Ser-203, Ser-226 and Ser-404 decreases signaling capacity. Phosphorylation at Ser-404 may protect from glucocorticoid-induced apoptosis. Phosphorylation at Ser-203 and Ser-211 is not required in regulation of chromosome segregation. May be dephosphorylated by PPP5C, attenuates NR3C1 action. Post-translationally, ubiquitinated by UBR5, leading to its degradation: UBR5 specifically recognizes and binds ligand-bound NR3C1 when it is not associated with coactivators (NCOAs). In presence of NCOAs, the UBR5-degron is not accessible, preventing its ubiquitination and degradation. Sumoylation at Lys-277 and Lys-293 negatively regulates its transcriptional activity. Sumoylation at Lys-703 positively regulates its transcriptional activity in the presence of RWDD3. Sumoylation at Lys-277 and Lys-293 is dispensable whereas sumoylation at Lys-703 is critical for the stimulatory effect of RWDD3 on its transcriptional activity. Heat shock increases sumoylation in a RWDD3-dependent manner.

The protein localises to the cytoplasm. It localises to the nucleus. The protein resides in the mitochondrion. Its subcellular location is the cytoskeleton. It is found in the spindle. The protein localises to the microtubule organizing center. It localises to the centrosome. The protein resides in the chromosome. Its subcellular location is the nucleoplasm. Its function is as follows. Receptor for glucocorticoids (GC). Has a dual mode of action: as a transcription factor that binds to glucocorticoid response elements (GRE), both for nuclear and mitochondrial DNA, and as a modulator of other transcription factors. Affects inflammatory responses, cellular proliferation and differentiation in target tissues. Involved in chromatin remodeling. Plays a role in rapid mRNA degradation by binding to the 5' UTR of target mRNAs and interacting with PNRC2 in a ligand-dependent manner which recruits the RNA helicase UPF1 and the mRNA-decapping enzyme DCP1A, leading to RNA decay. Could act as a coactivator for STAT5-dependent transcription upon growth hormone (GH) stimulation and could reveal an essential role of hepatic GR in the control of body growth. Mediates glucocorticoid-induced apoptosis. Promotes accurate chromosome segregation during mitosis. May act as a tumor suppressor. May play a negative role in adipogenesis through the regulation of lipolytic and antilipogenic gene expression. The protein is Glucocorticoid receptor (NR3C1) of Saimiri boliviensis boliviensis (Bolivian squirrel monkey).